Reading from the N-terminus, the 293-residue chain is Tumor necrosis factor receptor type 1-associated DEATH domain protein (293 aa).

Residues 156–171 carry the Nuclear export signal motif; the sequence is LRDDEVTQLEQQLQNS. Positions 200–290 constitute a Death domain; it reads TPADQQRFAA…SMAEIMLGIQ (91 aa). A Nuclear localization signal motif is present at residues 216 to 229; that stretch reads KRVGRALQKNCRAL.

Heterodimer with tnfrsf1a.

The protein resides in the nucleus. It localises to the cytoplasm. The protein localises to the cytoskeleton. Adapter molecule for tnfrsf1a that specifically associates with the cytoplasmic domain of activated tnfrsf1a mediating its interaction with fadd. The sequence is that of Tumor necrosis factor receptor type 1-associated DEATH domain protein from Danio rerio (Zebrafish).